Reading from the N-terminus, the 1818-residue chain is Nestin (1818 aa).

Positions 1 to 14 (WREKLEAEVQRQNL) are coil 1B. One can recognise an IF rod domain in the interval 1–135 (WREKLEAEVQ…TLLEAENSRL (135 aa)). The linker 2 stretch occupies residues 15–17 (YQE). A coil 2B region spans residues 18–135 (RVAHMESSLG…TLLEAENSRL (118 aa)). Serine 133 bears the Phosphoserine mark. Residues 136-1818 (QTPGRSSQAS…DRDSWSSGED (1683 aa)) form a tail region. Phosphothreonine occurs at positions 137 and 160. Serine 180 carries the phosphoserine modification. Residue threonine 210 is modified to Phosphothreonine. Disordered stretches follow at residues 266–309 (EEAG…GSSI), 336–355 (AQETQEDGLHTEEIQDSQGP), 377–451 (HETP…SPEG), and 480–787 (AFKK…EEDQ). Residue serine 288 is modified to Phosphoserine. Residues 292-303 (PVLEAKDGDSTE) are compositionally biased toward basic and acidic residues. The span at 382 to 398 (KENCNSLRSVDENQGTL) shows a compositional bias: polar residues. 2 positions are modified to phosphoserine: serine 390 and serine 400. Composition is skewed to basic and acidic residues over residues 400–427 (SPEEEKQTLLKSLEEKDVEVEKTLEKGV) and 434–443 (LGKEDPRIED). Serine 448 carries the phosphoserine modification. The span at 495–508 (EIQRVERLIEKEGQ) shows a compositional bias: basic and acidic residues. At serine 513 the chain carries Phosphoserine. Basic and acidic residues-rich tracts occupy residues 521–536 (TDRPLEKENGEPLKPV) and 565–586 (TDRPLEKEEDQLVERLVEKEGQ). Position 591 is a phosphoserine (serine 591). 3 stretches are compositionally biased toward basic and acidic residues: residues 599–614 (TDRPLEKENGEPLKPV), 643–664 (TDRPLEKEEDQLVERLVEKEGQ), and 711–732 (TDRPLEKEEDQRVERLIEKEGQ). Serine 737 is modified (phosphoserine). Positions 744 to 773 (ETYRLLEKENGEPLKPVEEEDQRVERLIEK) are enriched in basic and acidic residues. Phosphoserine occurs at positions 803 and 824. Positions 866-900 (ESLLKKGTQESLESHEDRNQETQDPQRFLEEEGQG) are disordered. Positions 868-886 (LLKKGTQESLESHEDRNQE) are enriched in basic and acidic residues. Residues serine 915 and serine 957 each carry the phosphoserine modification. The segment at 945–998 (SLLERESQDSGKSLEGQEAFRCLGKEDPESLQFPEVQDQEIQRSLQQETQQTLG) is disordered. Positions 986-997 (QRSLQQETQQTL) are enriched in polar residues. Residue lysine 1043 forms a Glycyl lysine isopeptide (Lys-Gly) (interchain with G-Cter in SUMO1); alternate linkage. Lysine 1043 is covalently cross-linked (Glycyl lysine isopeptide (Lys-Gly) (interchain with G-Cter in SUMO2); alternate). Phosphoserine is present on residues serine 1052, serine 1063, serine 1073, serine 1123, serine 1134, serine 1162, and serine 1238. Disordered stretches follow at residues 1134 to 1262 (SPEA…LEGQ) and 1334 to 1818 (HPSL…SGED). Basic and acidic residues-rich tracts occupy residues 1342–1361 (VEAKIAHDLEGPGKEPKEAG) and 1401–1416 (ASDHEGSDAPEPRPSE). Residues 1490 to 1505 (QDWEESREESEADELG) are compositionally biased toward acidic residues. 3 positions are modified to phosphoserine: serine 1495, serine 1499, and serine 1523. The span at 1570–1579 (LSSEEFEDLG) shows a compositional bias: acidic residues. Residues serine 1614 and serine 1623 each carry the phosphoserine modification. Residues 1616 to 1636 (GFADEEESGEEGEEEEHEDGT) show a composition bias toward acidic residues. Polar residues predominate over residues 1686–1697 (GLETESQDSAEP). Phosphoserine occurs at positions 1698, 1700, 1791, 1814, and 1815. The span at 1698–1708 (SGSEVSESVSS) shows a compositional bias: low complexity.

Belongs to the intermediate filament family. As to quaternary structure, interacts with FHOD3. Forms homodimers and homotetramers in vitro. In mixtures with other intermediate filament proteins such as vimentin and alpha-internexin, preferentially forms heterodimers which can assemble to form intermediate filaments if nestin does not exceed 25%. In terms of processing, constitutively phosphorylated. This increases during mitosis when the cytoplasmic intermediate filament network is reorganized.

Its function is as follows. Required for brain and eye development. Promotes the disassembly of phosphorylated vimentin intermediate filaments (IF) during mitosis and may play a role in the trafficking and distribution of IF proteins and other cellular factors to daughter cells during progenitor cell division. Required for survival, renewal and mitogen-stimulated proliferation of neural progenitor cells. In Mesocricetus auratus (Golden hamster), this protein is Nestin.